Here is a 580-residue protein sequence, read N- to C-terminus: Phosphatase and actin regulator 1 (580 aa).

Residues Ser-67 and Ser-78 each carry the phosphoserine modification. Residue Thr-104 is modified to Phosphothreonine. The Nuclear localization signal motif lies at 108 to 129 (RRRSKFANLGRIFKPWKWRKKK). One copy of the RPEL 1 repeat lies at 138–163 (AALERKISMRQSREELIKRGVLKEIY). Residues 331–351 (EQRVPCSTSYHSSGLHSSDGV) are disordered. Low complexity predominate over residues 337–348 (STSYHSSGLHSS). RPEL repeat units follow at residues 422–447 (DSLA…PRQT), 460–485 (TKLT…KPRN), and 498–523 (RRLT…IRFS). Residues 462-494 (LTRRLSQRPTAEELEQRNILKPRNEQEEQEEKR) are disordered. At Ser-467 the chain carries Phosphoserine. The span at 471–494 (TAEELEQRNILKPRNEQEEQEEKR) shows a compositional bias: basic and acidic residues. Ser-505 is subject to Phosphoserine.

Belongs to the phosphatase and actin regulator family. In terms of assembly, interacts (via RPEL repeats) with ACTA1 and PPP1CA; ACTA1 and PPP1CA compete for the same binding site. In terms of tissue distribution, selectively expressed in brain. High levels are found in the olfactory tubercle, nucleus accumbens core and shell, caudate-putamen, cerebral cortex, hippocampus and piriform cortex. Moderate to high levels in the olfactory bulb, arcuate and ventromedial hypothalamus, subthalamic nucleus, amygdala, lateral septum, habenula and thalamus. Low expression, if any, in substantia nigra pars compacta/pars reticula and globus pallidus (at protein level).

It localises to the cytoplasm. Its subcellular location is the synapse. The protein resides in the nucleus. Its function is as follows. Binds actin monomers (G actin) and plays a role in multiple processes including the regulation of actin cytoskeleton dynamics, actin stress fibers formation, cell motility and survival, formation of tubules by endothelial cells, and regulation of PPP1CA activity. Involved in the regulation of cortical neuron migration and dendrite arborization. This is Phosphatase and actin regulator 1 (Phactr1) from Rattus norvegicus (Rat).